The following is a 448-amino-acid chain: Fibulin-5 (448 aa).

Residues 1–23 form the signal peptide; sequence MPGIKRILTVTILALCLPSPGNA. Residues 42 to 82 enclose the EGF-like 1; calcium-binding domain; sequence DIDECRTIPEACRGDMMCVNQNGRYLCIPRTNPVYRGPYSN. Cystine bridges form between cysteine 46–cysteine 59, cysteine 53–cysteine 68, cysteine 131–cysteine 144, cysteine 138–cysteine 153, cysteine 155–cysteine 166, cysteine 172–cysteine 181, cysteine 177–cysteine 190, cysteine 192–cysteine 205, cysteine 211–cysteine 221, cysteine 217–cysteine 230, cysteine 232–cysteine 245, cysteine 251–cysteine 262, cysteine 258–cysteine 271, cysteine 273–cysteine 286, cysteine 292–cysteine 305, cysteine 299–cysteine 314, and cysteine 320–cysteine 332. Residues 54–56 carry the Cell attachment site motif; it reads RGD. The EGF-like 2; calcium-binding domain occupies 127 to 167; the sequence is DVDECATDSHQCNPTQICINTEGGYTCSCTDGYWLLEGQCL. One can recognise an EGF-like 3; calcium-binding domain in the interval 168–206; that stretch reads DIDECRYGYCQQLCANVPGSYSCTCNPGFTLNEDGRSCQ. The region spanning 207 to 246 is the EGF-like 4; calcium-binding domain; sequence DVNECATENPCVQTCVNTYGSFICRCDPGYELEEDGVHCS. The interaction with LOXL1 stretch occupies residues 245-448; the sequence is CSDMDECSFS…LRIYVSQYPF (204 aa). The 41-residue stretch at 247 to 287 folds into the EGF-like 5; calcium-binding domain; sequence DMDECSFSEFLCQHECVNQPGTYFCSCPPGYILLDDNRSCQ. Asparagine 283 and asparagine 296 each carry an N-linked (GlcNAc...) asparagine glycan. Residues 288-333 form the EGF-like 6; calcium-binding domain; sequence DINECEHRNHTCNLQQTCYNLQGGFKCIDPIRCEEPYLRISDNRCM.

The protein belongs to the fibulin family. As to quaternary structure, homodimer. Monomer, homodimerizes in presence of Ca(2+). Interacts with ELN. Interacts (via N-terminus) with the integrins ITGAV/ITGB3, ITGAV/ITGB5 and ITGA9/ITGB1. Interacts with FBN1 (via N-terminal domain). Forms a ternary complex with ELN and FBN1. Interacts with EFEMP2 with moderate affinity. Interacts with LOXL1. N-glycosylated.

Its subcellular location is the secreted. The protein localises to the extracellular space. It is found in the extracellular matrix. Functionally, essential for elastic fiber formation, is involved in the assembly of continuous elastin (ELN) polymer and promotes the interaction of microfibrils and ELN. Stabilizes and organizes elastic fibers in the skin, lung and vasculature. Promotes adhesion of endothelial cells through interaction of integrins and the RGD motif. Vascular ligand for integrin receptors which may play a role in vascular development and remodeling. May act as an adapter that mediates the interaction between FBN1 and ELN. This chain is Fibulin-5 (FBLN5), found in Pongo abelii (Sumatran orangutan).